The chain runs to 427 residues: Adenylosuccinate synthetase (427 aa).

Residues 12-18 (GDEGKGK) and 40-42 (GHT) contribute to the GTP site. Aspartate 13 (proton acceptor) is an active-site residue. Residues aspartate 13 and glycine 40 each contribute to the Mg(2+) site. IMP contacts are provided by residues 13-16 (DEGK), 38-41 (NAGH), threonine 128, arginine 142, glutamine 223, threonine 238, and arginine 302. Histidine 41 functions as the Proton donor in the catalytic mechanism. 298 to 304 (VTTGRAR) provides a ligand contact to substrate. Residues arginine 304, 330 to 332 (KLD), and 412 to 414 (GVG) contribute to the GTP site.

Belongs to the adenylosuccinate synthetase family. As to quaternary structure, homodimer. Requires Mg(2+) as cofactor.

Its subcellular location is the cytoplasm. It catalyses the reaction IMP + L-aspartate + GTP = N(6)-(1,2-dicarboxyethyl)-AMP + GDP + phosphate + 2 H(+). It functions in the pathway purine metabolism; AMP biosynthesis via de novo pathway; AMP from IMP: step 1/2. Plays an important role in the de novo pathway of purine nucleotide biosynthesis. Catalyzes the first committed step in the biosynthesis of AMP from IMP. In Frankia casuarinae (strain DSM 45818 / CECT 9043 / HFP020203 / CcI3), this protein is Adenylosuccinate synthetase.